The primary structure comprises 340 residues: 4-hydroxythreonine-4-phosphate dehydrogenase (340 aa).

T135 contacts substrate. H170, H215, and H276 together coordinate a divalent metal cation. Substrate contacts are provided by K284, N293, and R302.

The protein belongs to the PdxA family. As to quaternary structure, homodimer. A divalent metal cation is required as a cofactor.

The protein resides in the cytoplasm. It carries out the reaction 4-(phosphooxy)-L-threonine + NAD(+) = 3-amino-2-oxopropyl phosphate + CO2 + NADH. Its pathway is cofactor biosynthesis; pyridoxine 5'-phosphate biosynthesis; pyridoxine 5'-phosphate from D-erythrose 4-phosphate: step 4/5. Catalyzes the NAD(P)-dependent oxidation of 4-(phosphooxy)-L-threonine (HTP) into 2-amino-3-oxo-4-(phosphooxy)butyric acid which spontaneously decarboxylates to form 3-amino-2-oxopropyl phosphate (AHAP). The polypeptide is 4-hydroxythreonine-4-phosphate dehydrogenase (Synechococcus sp. (strain JA-2-3B'a(2-13)) (Cyanobacteria bacterium Yellowstone B-Prime)).